The chain runs to 249 residues: Pyridoxine 5'-phosphate synthase (249 aa).

N12 contributes to the 3-amino-2-oxopropyl phosphate binding site. 14–15 (DH) lines the 1-deoxy-D-xylulose 5-phosphate pocket. R23 contributes to the 3-amino-2-oxopropyl phosphate binding site. Residue H48 is the Proton acceptor of the active site. 2 residues coordinate 1-deoxy-D-xylulose 5-phosphate: R50 and H55. The Proton acceptor role is filled by E75. T105 is a 1-deoxy-D-xylulose 5-phosphate binding site. The Proton donor role is filled by H199. 3-amino-2-oxopropyl phosphate is bound by residues G200 and 221 to 222 (GH).

Belongs to the PNP synthase family. Homooctamer; tetramer of dimers.

It is found in the cytoplasm. The enzyme catalyses 3-amino-2-oxopropyl phosphate + 1-deoxy-D-xylulose 5-phosphate = pyridoxine 5'-phosphate + phosphate + 2 H2O + H(+). Its pathway is cofactor biosynthesis; pyridoxine 5'-phosphate biosynthesis; pyridoxine 5'-phosphate from D-erythrose 4-phosphate: step 5/5. Catalyzes the complicated ring closure reaction between the two acyclic compounds 1-deoxy-D-xylulose-5-phosphate (DXP) and 3-amino-2-oxopropyl phosphate (1-amino-acetone-3-phosphate or AAP) to form pyridoxine 5'-phosphate (PNP) and inorganic phosphate. This is Pyridoxine 5'-phosphate synthase from Roseobacter denitrificans (strain ATCC 33942 / OCh 114) (Erythrobacter sp. (strain OCh 114)).